Reading from the N-terminus, the 283-residue chain is 5'-nucleotidase SurE (283 aa).

Residues Asp14, Asp15, Ser47, and Asn105 each contribute to the a divalent metal cation site.

Belongs to the SurE nucleotidase family. It depends on a divalent metal cation as a cofactor.

The protein localises to the cytoplasm. It carries out the reaction a ribonucleoside 5'-phosphate + H2O = a ribonucleoside + phosphate. Functionally, nucleotidase that shows phosphatase activity on nucleoside 5'-monophosphates. The sequence is that of 5'-nucleotidase SurE from Chlamydia muridarum (strain MoPn / Nigg).